Here is a 117-residue protein sequence, read N- to C-terminus: Histone-like protein Hq1 (117 aa).

Composition is skewed to basic residues over residues 1 to 17 (MPAKKRKTTRQRRRSKA) and 39 to 50 (RKLRAAQKKLAK). The interval 1–117 (MPAKKRKTTR…RGRGRPRKKA (117 aa)) is disordered. A compositionally biased stretch (basic and acidic residues) spans 51–68 (AKKDASRKLAKLRKEAAR). The span at 71–117 (AAAKKTRAPSKKGRKKATRKKGGGRSRKTARKVSTMKRGRGRPRKKA) shows a compositional bias: basic residues.

Binds DNA in vitro. The polypeptide is Histone-like protein Hq1 (hcbA) (Coxiella burnetii (strain RSA 493 / Nine Mile phase I)).